The primary structure comprises 145 residues: Small ribosomal subunit protein eS19 (145 aa).

Lysine 23 is modified (N6-acetyllysine). Arginine 67 carries the omega-N-methylarginine modification. Lysine 111 and lysine 115 each carry N6-acetyllysine. Lysine 143 is modified (N6-succinyllysine).

The protein belongs to the eukaryotic ribosomal protein eS19 family. In terms of assembly, component of the small ribosomal subunit. Part of the small subunit (SSU) processome, composed of more than 70 proteins and the RNA chaperone small nucleolar RNA (snoRNA) U3. Interacts with RPS19BP1; the interaction is direct and mediates the integration of RPS19 in state post-A1. Interacts with RPS19BP1.

The protein localises to the cytoplasm. Its subcellular location is the nucleus. It is found in the nucleolus. Its function is as follows. Component of the small ribosomal subunit. The ribosome is a large ribonucleoprotein complex responsible for the synthesis of proteins in the cell. Required for pre-rRNA processing and maturation of 40S ribosomal subunits. Part of the small subunit (SSU) processome, first precursor of the small eukaryotic ribosomal subunit. During the assembly of the SSU processome in the nucleolus, many ribosome biogenesis factors, an RNA chaperone and ribosomal proteins associate with the nascent pre-rRNA and work in concert to generate RNA folding, modifications, rearrangements and cleavage as well as targeted degradation of pre-ribosomal RNA by the RNA exosome. This is Small ribosomal subunit protein eS19 (RPS19) from Pongo abelii (Sumatran orangutan).